A 328-amino-acid chain; its full sequence is Ribosomal RNA small subunit methyltransferase H (328 aa).

S-adenosyl-L-methionine is bound by residues G37–H39, D57, F83, D104, and Q111.

It belongs to the methyltransferase superfamily. RsmH family.

Its subcellular location is the cytoplasm. The catalysed reaction is cytidine(1402) in 16S rRNA + S-adenosyl-L-methionine = N(4)-methylcytidine(1402) in 16S rRNA + S-adenosyl-L-homocysteine + H(+). In terms of biological role, specifically methylates the N4 position of cytidine in position 1402 (C1402) of 16S rRNA. This Neisseria meningitidis serogroup C / serotype 2a (strain ATCC 700532 / DSM 15464 / FAM18) protein is Ribosomal RNA small subunit methyltransferase H.